Consider the following 886-residue polypeptide: DNA gyrase subunit A (886 aa).

A Topo IIA-type catalytic domain is found at 35 to 501; sequence LPDVRDGLKP…GFEDLEDEDL (467 aa). Tyrosine 123 functions as the O-(5'-phospho-DNA)-tyrosine intermediate in the catalytic mechanism. Positions 528–534 match the GyrA-box motif; the sequence is QNRGGRG. Positions 810-860 are disordered; sequence VKEDADEENEDEQSTVSEDGTEQQREAVVNDETPGNAIHTEVIDSEVNDED. Positions 813–822 are enriched in acidic residues; that stretch reads DADEENEDEQ.

This sequence belongs to the type II topoisomerase GyrA/ParC subunit family. Heterotetramer, composed of two GyrA and two GyrB chains. In the heterotetramer, GyrA contains the active site tyrosine that forms a transient covalent intermediate with DNA, while GyrB binds cofactors and catalyzes ATP hydrolysis.

It is found in the cytoplasm. It carries out the reaction ATP-dependent breakage, passage and rejoining of double-stranded DNA.. A type II topoisomerase that negatively supercoils closed circular double-stranded (ds) DNA in an ATP-dependent manner to modulate DNA topology and maintain chromosomes in an underwound state. Negative supercoiling favors strand separation, and DNA replication, transcription, recombination and repair, all of which involve strand separation. Also able to catalyze the interconversion of other topological isomers of dsDNA rings, including catenanes and knotted rings. Type II topoisomerases break and join 2 DNA strands simultaneously in an ATP-dependent manner. The polypeptide is DNA gyrase subunit A (Staphylococcus aureus (strain MRSA252)).